The following is a 344-amino-acid chain: Anthranilate phosphoribosyltransferase (344 aa).

5-phospho-alpha-D-ribose 1-diphosphate is bound by residues glycine 80, 83-84 (GD), threonine 88, 90-93 (NVST), 108-116 (KHGNRSVSS), and serine 120. Glycine 80 is a binding site for anthranilate. Serine 92 lines the Mg(2+) pocket. Asparagine 111 provides a ligand contact to anthranilate. Arginine 166 lines the anthranilate pocket. Aspartate 225 and glutamate 226 together coordinate Mg(2+).

It belongs to the anthranilate phosphoribosyltransferase family. In terms of assembly, homodimer. Requires Mg(2+) as cofactor.

It carries out the reaction N-(5-phospho-beta-D-ribosyl)anthranilate + diphosphate = 5-phospho-alpha-D-ribose 1-diphosphate + anthranilate. Its pathway is amino-acid biosynthesis; L-tryptophan biosynthesis; L-tryptophan from chorismate: step 2/5. In terms of biological role, catalyzes the transfer of the phosphoribosyl group of 5-phosphorylribose-1-pyrophosphate (PRPP) to anthranilate to yield N-(5'-phosphoribosyl)-anthranilate (PRA). The sequence is that of Anthranilate phosphoribosyltransferase from Legionella pneumophila (strain Corby).